Here is a 391-residue protein sequence, read N- to C-terminus: Elongation factor Tu 2 (391 aa).

Positions 10–201 constitute a tr-type G domain; it reads KPHVNIGTIG…EVDNYIPTPE (192 aa). The G1 stretch occupies residues 19–26; it reads GHVDHGKT. GTP is bound at residue 19–26; that stretch reads GHVDHGKT. Thr-26 is a Mg(2+) binding site. A G2 region spans residues 55–59; the sequence is GITIS. The G3 stretch occupies residues 76–79; that stretch reads DCPG. Residues 76–80 and 131–134 each bind GTP; these read DCPGH and NKVD. Residues 131-134 are G4; that stretch reads NKVD. The segment at 169-171 is G5; it reads SAL.

It belongs to the TRAFAC class translation factor GTPase superfamily. Classic translation factor GTPase family. EF-Tu/EF-1A subfamily. In terms of assembly, monomer.

The protein resides in the cytoplasm. The catalysed reaction is GTP + H2O = GDP + phosphate + H(+). Functionally, GTP hydrolase that promotes the GTP-dependent binding of aminoacyl-tRNA to the A-site of ribosomes during protein biosynthesis. This Bartonella quintana (strain Toulouse) (Rochalimaea quintana) protein is Elongation factor Tu 2.